The primary structure comprises 186 residues: HTH-type transcriptional regulator Hpr (186 aa).

Residues 13 to 157 (AMLYSQRIAQ…VMAVIRNIYG (145 aa)) enclose the HTH marR-type domain. A DNA-binding region (H-T-H motif) is located at residues 63–86 (ISDVAKFGVMHVSTAFNFSKKLEE).

As to quaternary structure, homodimer.

Negative regulator of protease production and sporulation. The polypeptide is HTH-type transcriptional regulator Hpr (Lysinibacillus sphaericus (strain C3-41)).